The sequence spans 314 residues: Ribosomal RNA small subunit methyltransferase H (314 aa).

S-adenosyl-L-methionine contacts are provided by residues 36–38, D56, F81, D103, and Q110; that span reads GGH.

This sequence belongs to the methyltransferase superfamily. RsmH family.

It localises to the cytoplasm. It catalyses the reaction cytidine(1402) in 16S rRNA + S-adenosyl-L-methionine = N(4)-methylcytidine(1402) in 16S rRNA + S-adenosyl-L-homocysteine + H(+). Specifically methylates the N4 position of cytidine in position 1402 (C1402) of 16S rRNA. This is Ribosomal RNA small subunit methyltransferase H from Shewanella sediminis (strain HAW-EB3).